A 608-amino-acid chain; its full sequence is Aspartate--tRNA(Asp/Asn) ligase (608 aa).

Glu179 contributes to the L-aspartate binding site. The interval 203 to 206 (QLFK) is aspartate. Arg225 contributes to the L-aspartate binding site. Residues 225–227 (RDE) and Gln234 contribute to the ATP site. His461 contacts L-aspartate. Glu494 serves as a coordination point for ATP. Arg501 is an L-aspartate binding site. An ATP-binding site is contributed by 546-549 (GLDR).

The protein belongs to the class-II aminoacyl-tRNA synthetase family. Type 1 subfamily. In terms of assembly, homodimer.

It is found in the cytoplasm. The enzyme catalyses tRNA(Asx) + L-aspartate + ATP = L-aspartyl-tRNA(Asx) + AMP + diphosphate. Its function is as follows. Aspartyl-tRNA synthetase with relaxed tRNA specificity since it is able to aspartylate not only its cognate tRNA(Asp) but also tRNA(Asn). Reaction proceeds in two steps: L-aspartate is first activated by ATP to form Asp-AMP and then transferred to the acceptor end of tRNA(Asp/Asn). The chain is Aspartate--tRNA(Asp/Asn) ligase from Psychrobacter arcticus (strain DSM 17307 / VKM B-2377 / 273-4).